The following is a 393-amino-acid chain: NAD(P)H-quinone oxidoreductase subunit H, chloroplastic (393 aa).

It belongs to the complex I 49 kDa subunit family. As to quaternary structure, NDH is composed of at least 16 different subunits, 5 of which are encoded in the nucleus.

It is found in the plastid. The protein resides in the chloroplast thylakoid membrane. It carries out the reaction a plastoquinone + NADH + (n+1) H(+)(in) = a plastoquinol + NAD(+) + n H(+)(out). The enzyme catalyses a plastoquinone + NADPH + (n+1) H(+)(in) = a plastoquinol + NADP(+) + n H(+)(out). NDH shuttles electrons from NAD(P)H:plastoquinone, via FMN and iron-sulfur (Fe-S) centers, to quinones in the photosynthetic chain and possibly in a chloroplast respiratory chain. The immediate electron acceptor for the enzyme in this species is believed to be plastoquinone. Couples the redox reaction to proton translocation, and thus conserves the redox energy in a proton gradient. The sequence is that of NAD(P)H-quinone oxidoreductase subunit H, chloroplastic from Zygnema circumcarinatum (Green alga).